A 157-amino-acid polypeptide reads, in one-letter code: Large ribosomal subunit protein uL22 (157 aa).

It belongs to the universal ribosomal protein uL22 family. Part of the 50S ribosomal subunit.

This protein binds specifically to 23S rRNA. It makes multiple contacts with different domains of the 23S rRNA in the assembled 50S subunit and ribosome. Its function is as follows. The globular domain of the protein is located near the polypeptide exit tunnel on the outside of the subunit, while an extended beta-hairpin is found that lines the wall of the exit tunnel in the center of the 70S ribosome. This chain is Large ribosomal subunit protein uL22, found in Methanocorpusculum labreanum (strain ATCC 43576 / DSM 4855 / Z).